Consider the following 946-residue polypeptide: Protein translocase subunit SecA (946 aa).

Residues Gln-89, 107–111, and Asp-508 contribute to the ATP site; that span reads GEGKT. The tract at residues 534 to 569 is disordered; that stretch reads PEDSHKPPVPLQRRKDSSVGFGKEENNSKDKKVNHS. Residues 546–569 show a composition bias toward basic and acidic residues; the sequence is RRKDSSVGFGKEENNSKDKKVNHS.

The protein belongs to the SecA family. As to quaternary structure, monomer and homodimer. Part of the essential Sec protein translocation apparatus which comprises SecA, SecYEG and auxiliary proteins SecDF. Other proteins may also be involved.

The protein localises to the cell inner membrane. It is found in the cellular thylakoid membrane. The protein resides in the cytoplasm. It carries out the reaction ATP + H2O + cellular proteinSide 1 = ADP + phosphate + cellular proteinSide 2.. In terms of biological role, part of the Sec protein translocase complex. Interacts with the SecYEG preprotein conducting channel. Has a central role in coupling the hydrolysis of ATP to the transfer of proteins into and across the cell membrane, serving as an ATP-driven molecular motor driving the stepwise translocation of polypeptide chains across the membrane. Its function is as follows. Probably participates in protein translocation into and across both the cytoplasmic and thylakoid membranes in cyanobacterial cells. This chain is Protein translocase subunit SecA, found in Prochlorococcus marinus (strain SARG / CCMP1375 / SS120).